Consider the following 147-residue polypeptide: Augurin (147 aa).

An N-terminal signal peptide occupies residues 1–31 (MANSSARPAFLVMTALALLLLLCVGPGGISG). Propeptides lie at residues 32-68 (NKLKLLLRKREAPAPTMTPVAVQESRAKEFLSSLRRP) and 132-147 (SAHSFRHGASVNYDDY).

Belongs to the augurin family.

It is found in the secreted. The protein resides in the cytoplasm. The protein localises to the apical cell membrane. Its function is as follows. Probable hormone that may attenuate cell proliferation and induce senescence of oligodendrocyte and neural precursor cells in the central nervous system. ECRG4-induced senescence is characterized by G1 arrest, RB1 dephosphorylation and accelerated CCND1 and CCND3 proteasomal degradation. The sequence is that of Augurin from Bos taurus (Bovine).